The chain runs to 471 residues: Sestrin-2 (471 aa).

M1 carries the post-translational modification N-acetylmethionine. The tract at residues G57 to T230 is N-terminal domain; mediates the alkylhydroperoxide reductase activity. C116 acts as the Cysteine sulfenic acid (-SOH) intermediate in catalysis. K166 participates in a covalent cross-link: Glycyl lysine isopeptide (Lys-Gly) (interchain with G-Cter in ubiquitin). The tract at residues D212–G241 is disordered. At S240 the chain carries Phosphoserine. Positions A299–T471 are C-terminal domain; mediates TORC1 regulation. L-leucine is bound by residues T365–T368, T377, and E442.

It belongs to the sestrin family. Interacts with the GATOR2 complex which is composed of MIOS, SEC13, SEH1L, WDR24 and WDR59; the interaction is negatively regulated by leucine. Conveys leucine availability via direct interaction with SEH1L and WDR24 components of the GATOR2 complex. Interacts with RRAGA, RRAGB, RRAGC and RRAGD; may function as a guanine nucleotide dissociation inhibitor for RRAGs and regulate them. May interact with the TORC2 complex. Interacts with KEAP1, RBX1, SQSTM and ULK1; to regulate the degradation of KEAP1. May also associate with the complex composed of TSC1, TSC2 and the AMP-responsive protein kinase/AMPK to regulate TORC1 signaling. May interact with PRDX1. Post-translationally, phosphorylated by ULK1 at multiple sites. In terms of processing, ubiquitinated at Lys-166 by RNF167 via 'Lys-63'-linked polyubiquitination in response to leucine deprivation: ubiquitination promotes SESN2-interaction with the GATOR2 complex, leading to inhibit the TORC1 signaling pathway. Deubiquitinated at Lys-166 by STAMBPL1, promoting the TORC1 signaling pathway. Ubiquitinated by RNF186; ubiquitination mediates proteasomal degradation.

The protein localises to the cytoplasm. The catalysed reaction is a hydroperoxide + L-cysteinyl-[protein] = S-hydroxy-L-cysteinyl-[protein] + an alcohol. Functions as an intracellular leucine sensor that negatively regulates the mTORC1 signaling pathway through the GATOR complex. In absence of leucine, binds the GATOR subcomplex GATOR2 and prevents mTORC1 signaling. Binding of leucine to SESN2 disrupts its interaction with GATOR2 thereby activating the TORC1 signaling pathway. This stress-inducible metabolic regulator also plays a role in protection against oxidative and genotoxic stresses. May negatively regulate protein translation in response to endoplasmic reticulum stress, via mTORC1. May positively regulate the transcription by NFE2L2 of genes involved in the response to oxidative stress by facilitating the SQSTM1-mediated autophagic degradation of KEAP1. May also mediate TP53 inhibition of TORC1 signaling upon genotoxic stress. Moreover, may prevent the accumulation of reactive oxygen species (ROS) through the alkylhydroperoxide reductase activity born by the N-terminal domain of the protein. Was originally reported to contribute to oxidative stress resistance by reducing PRDX1. However, this could not be confirmed. The sequence is that of Sestrin-2 from Bos taurus (Bovine).